The primary structure comprises 483 residues: Myosin-binding protein H (483 aa).

Positions 1 to 15 are enriched in polar residues; that stretch reads MTGKATSEASVSTPE. Residues 1–78 form a disordered region; it reads MTGKATSEAS…PEPPSEDVPS (78 aa). 3 positions are modified to phosphothreonine: threonine 2, threonine 6, and threonine 26. Over residues 41-66 the composition is skewed to low complexity; it reads QEQAPEPQKPQAQDPAAPAASAMPAA. The Fibronectin type-III 1 domain occupies 79-174; it reads APLRLTLEDV…LDQPVHIQEI (96 aa). In terms of domain architecture, Ig-like C2-type 1 spans 178–266; the sequence is PKIRVPRHLR…EGLEAKASID (89 aa). The Fibronectin type-III 2 domain maps to 275–370; that stretch reads PPSSIKLLDV…TKELAHIHKA (96 aa). Residues 388–472 form the Ig-like C2-type 2 domain; sequence PSFTQPLADH…INVLGEASVD (85 aa).

This sequence belongs to the immunoglobulin superfamily. MyBP family. In terms of tissue distribution, skeletal muscle. Expressed at low levels in heart ventricles.

Its function is as follows. Binds to myosin; probably involved in interaction with thick myofilaments in the A-band. This chain is Myosin-binding protein H (Mybph), found in Mus musculus (Mouse).